The primary structure comprises 353 residues: Methionine import ATP-binding protein MetN (353 aa).

The ABC transporter domain maps to 8–249 (LDQIDVTFHQ…PKQPLTQDFI (242 aa)). Residue 42-49 (GYSGAGKS) coordinates ATP.

Belongs to the ABC transporter superfamily. Methionine importer (TC 3.A.1.24) family. As to quaternary structure, the complex is composed of two ATP-binding proteins (MetN), two transmembrane proteins (MetI) and a solute-binding protein (MetQ).

Its subcellular location is the cell membrane. It catalyses the reaction L-methionine(out) + ATP + H2O = L-methionine(in) + ADP + phosphate + H(+). It carries out the reaction D-methionine(out) + ATP + H2O = D-methionine(in) + ADP + phosphate + H(+). Its function is as follows. Part of the ABC transporter complex MetNIQ involved in methionine import. Responsible for energy coupling to the transport system. In Streptococcus pneumoniae serotype 4 (strain ATCC BAA-334 / TIGR4), this protein is Methionine import ATP-binding protein MetN.